Consider the following 159-residue polypeptide: SsrA-binding protein (159 aa).

This sequence belongs to the SmpB family.

It localises to the cytoplasm. Functionally, required for rescue of stalled ribosomes mediated by trans-translation. Binds to transfer-messenger RNA (tmRNA), required for stable association of tmRNA with ribosomes. tmRNA and SmpB together mimic tRNA shape, replacing the anticodon stem-loop with SmpB. tmRNA is encoded by the ssrA gene; the 2 termini fold to resemble tRNA(Ala) and it encodes a 'tag peptide', a short internal open reading frame. During trans-translation Ala-aminoacylated tmRNA acts like a tRNA, entering the A-site of stalled ribosomes, displacing the stalled mRNA. The ribosome then switches to translate the ORF on the tmRNA; the nascent peptide is terminated with the 'tag peptide' encoded by the tmRNA and targeted for degradation. The ribosome is freed to recommence translation, which seems to be the essential function of trans-translation. The protein is SsrA-binding protein of Acidiphilium cryptum (strain JF-5).